A 503-amino-acid chain; its full sequence is AMP phosphorylase (503 aa).

Residues Gly-168, Ser-194–Ser-199, and Thr-203 each bind AMP. Asp-256 serves as the catalytic Proton donor. AMP is bound by residues Ser-264 and Lys-288.

This sequence belongs to the thymidine/pyrimidine-nucleoside phosphorylase family. Type 2 subfamily.

It catalyses the reaction AMP + phosphate = alpha-D-ribose 1,5-bisphosphate + adenine. The enzyme catalyses CMP + phosphate = cytosine + alpha-D-ribose 1,5-bisphosphate. The catalysed reaction is UMP + phosphate = alpha-D-ribose 1,5-bisphosphate + uracil. Its function is as follows. Catalyzes the conversion of AMP and phosphate to adenine and ribose 1,5-bisphosphate (R15P). Exhibits phosphorylase activity toward CMP and UMP in addition to AMP. Functions in an archaeal AMP degradation pathway, together with R15P isomerase and RubisCO. This is AMP phosphorylase from Thermococcus sibiricus (strain DSM 12597 / MM 739).